The chain runs to 347 residues: Tetracycline resistance determinant (347 aa).

The next 8 membrane-spanning stretches (helical) occupy residues 3 to 20 (VLGAAALALFLVPLLIVA), 30 to 52 (SPAALALFALGAAGLAVFIPVEL), 73 to 95 (CSAVNFTIGVGIFGTVTTLPLFL), 108 to 130 (LVVIPFMLGTIASQMVSGKLIAS), 137 to 156 (LAIVGLGSMAGALLAMATTG), 161 to 183 (MWGIVLIVLWLGVGIGLSQTVIT), 204 to 226 (CAGQIGGSTGIAVLFSVMFAVAL), and 294 to 316 (GFHIMFLPGGVVLLAGFVMTWFL). The interval 321-347 (EETAPEEERPAESGAGAKNGPLPASDA) is disordered.

It belongs to the major facilitator superfamily. TCR/Tet family.

The protein resides in the cell membrane. Resistance to tetracycline by an active tetracycline efflux. This is an energy-dependent process that decreases the accumulation of the antibiotic in whole cells. This protein functions as a metal-tetracycline/H(+) antiporter. The polypeptide is Tetracycline resistance determinant (tetB) (Streptomyces rimosus).